A 348-amino-acid polypeptide reads, in one-letter code: MO25-like protein At2g03410 (348 aa).

This sequence belongs to the Mo25 family.

The sequence is that of MO25-like protein At2g03410 from Arabidopsis thaliana (Mouse-ear cress).